The chain runs to 125 residues: Photosystem II extrinsic protein U (125 aa).

The signal sequence occupies residues 1 to 29 (MKRLLSWLTGLVVIAGLLIGLLVPPSVSA).

The protein belongs to the PsbU family. In terms of assembly, PSII is composed of 1 copy each of membrane proteins PsbA, PsbB, PsbC, PsbD, PsbE, PsbF, PsbH, PsbI, PsbJ, PsbK, PsbL, PsbM, PsbT, PsbX, PsbY, PsbZ, Psb30/Ycf12, peripheral proteins PsbO, CyanoQ (PsbQ), PsbU, PsbV and a large number of cofactors. It forms dimeric complexes.

The protein resides in the cellular thylakoid membrane. One of the extrinsic, lumenal subunits of photosystem II (PSII). PSII is a light-driven water plastoquinone oxidoreductase, using light energy to abstract electrons from H(2)O, generating a proton gradient subsequently used for ATP formation. The extrinsic proteins stabilize the structure of photosystem II oxygen-evolving complex (OEC), the ion environment of oxygen evolution and protect the OEC against heat-induced inactivation. The sequence is that of Photosystem II extrinsic protein U from Synechococcus sp. (strain CC9311).